The chain runs to 379 residues: 1-deoxy-D-xylulose 5-phosphate reductoisomerase (379 aa).

The NADPH site is built by threonine 10, glycine 11, serine 12, isoleucine 13, glycine 36, asparagine 38, and asparagine 121. Residue lysine 122 participates in 1-deoxy-D-xylulose 5-phosphate binding. Glutamate 123 lines the NADPH pocket. Residue aspartate 147 coordinates Mn(2+). 1-deoxy-D-xylulose 5-phosphate-binding residues include serine 148, glutamate 149, serine 173, and histidine 196. Position 149 (glutamate 149) interacts with Mn(2+). Glycine 202 is an NADPH binding site. Serine 209, asparagine 214, lysine 215, and glutamate 218 together coordinate 1-deoxy-D-xylulose 5-phosphate. Glutamate 218 serves as a coordination point for Mn(2+).

The protein belongs to the DXR family. Mg(2+) serves as cofactor. It depends on Mn(2+) as a cofactor.

The catalysed reaction is 2-C-methyl-D-erythritol 4-phosphate + NADP(+) = 1-deoxy-D-xylulose 5-phosphate + NADPH + H(+). It functions in the pathway isoprenoid biosynthesis; isopentenyl diphosphate biosynthesis via DXP pathway; isopentenyl diphosphate from 1-deoxy-D-xylulose 5-phosphate: step 1/6. Catalyzes the NADPH-dependent rearrangement and reduction of 1-deoxy-D-xylulose-5-phosphate (DXP) to 2-C-methyl-D-erythritol 4-phosphate (MEP). This Shouchella clausii (strain KSM-K16) (Alkalihalobacillus clausii) protein is 1-deoxy-D-xylulose 5-phosphate reductoisomerase.